The primary structure comprises 77 residues: Acyl carrier protein (77 aa).

Residues 2–77 (SDVAERVKKI…DAIDFITANS (76 aa)) enclose the Carrier domain. Residue Ser-37 is modified to O-(pantetheine 4'-phosphoryl)serine.

It belongs to the acyl carrier protein (ACP) family. In terms of processing, 4'-phosphopantetheine is transferred from CoA to a specific serine of apo-ACP by AcpS. This modification is essential for activity because fatty acids are bound in thioester linkage to the sulfhydryl of the prosthetic group.

It localises to the cytoplasm. It functions in the pathway lipid metabolism; fatty acid biosynthesis. Functionally, carrier of the growing fatty acid chain in fatty acid biosynthesis. The sequence is that of Acyl carrier protein from Paramagnetospirillum magneticum (strain ATCC 700264 / AMB-1) (Magnetospirillum magneticum).